A 93-amino-acid polypeptide reads, in one-letter code: uncharacterized protein (93 aa).

This is an uncharacterized protein from Schizosaccharomyces pombe (strain 972 / ATCC 24843) (Fission yeast).